Here is a 438-residue protein sequence, read N- to C-terminus: Methylenetetrahydrofolate--tRNA-(uracil-5-)-methyltransferase TrmFO (438 aa).

An FAD-binding site is contributed by 10–15; it reads GGGLAG.

The protein belongs to the MnmG family. TrmFO subfamily. Requires FAD as cofactor.

The protein localises to the cytoplasm. It carries out the reaction uridine(54) in tRNA + (6R)-5,10-methylene-5,6,7,8-tetrahydrofolate + NADH + H(+) = 5-methyluridine(54) in tRNA + (6S)-5,6,7,8-tetrahydrofolate + NAD(+). The enzyme catalyses uridine(54) in tRNA + (6R)-5,10-methylene-5,6,7,8-tetrahydrofolate + NADPH + H(+) = 5-methyluridine(54) in tRNA + (6S)-5,6,7,8-tetrahydrofolate + NADP(+). In terms of biological role, catalyzes the folate-dependent formation of 5-methyl-uridine at position 54 (M-5-U54) in all tRNAs. This Trichormus variabilis (strain ATCC 29413 / PCC 7937) (Anabaena variabilis) protein is Methylenetetrahydrofolate--tRNA-(uracil-5-)-methyltransferase TrmFO.